Reading from the N-terminus, the 382-residue chain is uncharacterized protein (382 aa).

The next 11 membrane-spanning stretches (helical) occupy residues 8–28 (VLLL…LNTL), 41–61 (WQVG…TLIA), 73–93 (SYHC…LTVD), 94–114 (FWSW…IWVI), 133–153 (AAYM…LGIV), 157–177 (LLSV…PLLF), 208–228 (GCII…LYLS), 235–255 (ASVG…QWPM), 274–294 (VVIL…ALFI), 325–345 (ALLM…SLLM), and 349–369 (SDNL…MMLL).

Belongs to the major facilitator superfamily. YcaD (TC 2.A.1.26) family.

It localises to the cell inner membrane. This is an uncharacterized protein from Yersinia pseudotuberculosis serotype IB (strain PB1/+).